The primary structure comprises 408 residues: Peptidase T (408 aa).

H79 serves as a coordination point for Zn(2+). Residue D81 is part of the active site. A Zn(2+)-binding site is contributed by D139. E173 serves as the catalytic Proton acceptor. Residues E174, D196, and H378 each contribute to the Zn(2+) site.

Belongs to the peptidase M20B family. The cofactor is Zn(2+).

Its subcellular location is the cytoplasm. The catalysed reaction is Release of the N-terminal residue from a tripeptide.. Functionally, cleaves the N-terminal amino acid of tripeptides. This chain is Peptidase T, found in Shouchella clausii (strain KSM-K16) (Alkalihalobacillus clausii).